The primary structure comprises 777 residues: Lon protease (777 aa).

The Lon N-terminal domain maps to 11–204 (IPVLPLRDVV…FLMAIMETEI (194 aa)). 356-363 (GPPGVGKT) is a binding site for ATP. Residues 592–773 (LNQIGQVVGL…EEVLKIALEN (182 aa)) enclose the Lon proteolytic domain. Residues Ser679 and Lys722 contribute to the active site.

Belongs to the peptidase S16 family. Homohexamer. Organized in a ring with a central cavity.

Its subcellular location is the cytoplasm. It catalyses the reaction Hydrolysis of proteins in presence of ATP.. ATP-dependent serine protease that mediates the selective degradation of mutant and abnormal proteins as well as certain short-lived regulatory proteins. Required for cellular homeostasis and for survival from DNA damage and developmental changes induced by stress. Degrades polypeptides processively to yield small peptide fragments that are 5 to 10 amino acids long. Binds to DNA in a double-stranded, site-specific manner. This Buchnera aphidicola subsp. Schizaphis graminum (strain Sg) protein is Lon protease.